Reading from the N-terminus, the 109-residue chain is MSWQTYVDDHLMCEIEGNYLTSAAIIGQDGSIWAQSASFPQFKPEEITAIMNDFSEPGTLAPTGLYLGGTKYMVIQGEAGAVIRGKKGPGGVTVKKTNQALIIGIYDEP.

Belongs to the profilin family. In terms of assembly, multimer. Occurs in many kinds of cells as a complex with monomeric actin in a 1:1 ratio.

It localises to the cytoplasm. It is found in the cytoskeleton. Binds to actin and affects the structure of the cytoskeleton. At high concentrations, profilin prevents the polymerization of actin, whereas it enhances it at low concentrations. By binding to PIP2, it inhibits the formation of IP3 and DG. The polypeptide is Profilin (Actinidia deliciosa (Kiwi)).